The following is a 721-amino-acid chain: Leucine-rich repeat flightless-interacting protein 2 (721 aa).

The interval 1–370 is DVL3-binding; that stretch reads MGTPASGRKR…YMQGLKELKE (370 aa). S18 is subject to Phosphoserine. Positions 22–49 form a coiled coil; the sequence is EALSNIAREAEARLAAKRAARAEARDIR. Residues G96, L101, Y168, S173, S190, and S202 each carry the phosphoserine modification. Disordered regions lie at residues 232 to 262 and 295 to 338; these read SARS…ESVV and KSDK…IDPD. Composition is skewed to polar residues over residues 237 to 251 and 305 to 338; these read PGFT…VSSD and TRPS…IDPD. Residues S309, S312, S320, S324, and S328 each carry the phosphoserine modification. T331 is modified (phosphothreonine). 2 positions are modified to phosphoserine: S332 and S333. 2 coiled-coil regions span residues 349–524 and 566–714; these read DLKD…GEKH and LDVR…KANR.

This sequence belongs to the LRRFIP family. Interacts (via N-terminus) with DVL3. Interacts with FLII. Weakly interacts with MYD88 in resting cells. Following LPS-stimulation, the interaction with MYD88 is rapidly enhanced; the complex gradually dissociates to basal levels after 6 hours of stimulation. Interaction with MYD88 is regulated by LPS-induced phosphorylation at Ser-202. In the presence of LPS, competes with FLII for MYD88-binding. Post-translationally, ser-190 and Ser-202 are phosphorylated in response to LPS stimulation. Ser-202 phosphorylation regulates the LPS-induced interaction with MYD88. As to expression, widely expressed, with highest levels in heart and skeletal muscle.

Functionally, may function as activator of the canonical Wnt signaling pathway, in association with DVL3, upstream of CTNNB1/beta-catenin. Positively regulates Toll-like receptor (TLR) signaling in response to agonist probably by competing with the negative FLII regulator for MYD88-binding. The protein is Leucine-rich repeat flightless-interacting protein 2 (LRRFIP2) of Homo sapiens (Human).